The primary structure comprises 436 residues: Serine carboxypeptidase-like 15 (436 aa).

The N-terminal stretch at M1–S24 is a signal peptide. 3 cysteine pairs are disulfide-bonded: C83–C326, C247–C261, and C285–C292. N-linked (GlcNAc...) asparagine glycosylation is present at N104. S179 is an active-site residue. N-linked (GlcNAc...) asparagine glycosylation is found at N306 and N345. D361 is an active-site residue. Residue N377 is glycosylated (N-linked (GlcNAc...) asparagine). H414 is an active-site residue.

Belongs to the peptidase S10 family. In terms of tissue distribution, expressed in seedlings and roots.

The protein localises to the secreted. In terms of biological role, probable carboxypeptidase. This is Serine carboxypeptidase-like 15 (SCPL15) from Arabidopsis thaliana (Mouse-ear cress).